A 412-amino-acid polypeptide reads, in one-letter code: Glutamyl-tRNA reductase (412 aa).

Substrate is bound by residues 52 to 55 (TCNR), Ser108, 113 to 115 (EYE), and Gln119. Cys53 acts as the Nucleophile in catalysis. 189–194 (GAGEIG) provides a ligand contact to NADP(+).

The protein belongs to the glutamyl-tRNA reductase family. Homodimer.

It catalyses the reaction (S)-4-amino-5-oxopentanoate + tRNA(Glu) + NADP(+) = L-glutamyl-tRNA(Glu) + NADPH + H(+). It participates in porphyrin-containing compound metabolism; protoporphyrin-IX biosynthesis; 5-aminolevulinate from L-glutamyl-tRNA(Glu): step 1/2. Its function is as follows. Catalyzes the NADPH-dependent reduction of glutamyl-tRNA(Glu) to glutamate 1-semialdehyde (GSA). This is Glutamyl-tRNA reductase from Sulfurisphaera tokodaii (strain DSM 16993 / JCM 10545 / NBRC 100140 / 7) (Sulfolobus tokodaii).